The chain runs to 387 residues: Protein disulfide isomerase pTAC5, chloroplastic (387 aa).

The N-terminal 40 residues, 1 to 40 (MASSSLPLSLPFPLRSLTSTTRSLPFQCSPLFFSIPSSIV), are a transit peptide targeting the chloroplast. Coiled coils occupy residues 72–106 (EQRW…LGNS) and 143–163 (REQI…AEEK). A CR-type zinc finger spans residues 318–387 (PVDRSESTNT…CDVCDGKKNL (70 aa)).

In terms of assembly, interacts with HSP21; the formed complex associates with the plastid-encoded RNA polymerase (PEP) complex not only during transcription initiation, but also during elongation and termination, and with a stronger efficiency in illuminated chloroplasts. Binds to promoter regions of PEP-dependent genes, especially after a heat stress. Interacts with FLN2.

The protein localises to the plastid. It is found in the chloroplast stroma. The protein resides in the chloroplast nucleoid. The enzyme catalyses Catalyzes the rearrangement of -S-S- bonds in proteins.. Exhibits zinc-dependent disulfide isomerase activity. Required for seedling and chloroplast development under heat stress, probably by maintaining plastid-encoded RNA polymerase (PEP)-dependent transcription. This is Protein disulfide isomerase pTAC5, chloroplastic from Arabidopsis thaliana (Mouse-ear cress).